Here is a 200-residue protein sequence, read N- to C-terminus: Small ribosomal subunit protein uS4 (200 aa).

A disordered region spans residues 22 to 41 (TGKELQKRPYAPGQHGPNQR). One can recognise an S4 RNA-binding domain in the interval 92–152 (SRLDNLVYRM…EKSRNLQVIK (61 aa)).

Belongs to the universal ribosomal protein uS4 family. Part of the 30S ribosomal subunit. Contacts protein S5. The interaction surface between S4 and S5 is involved in control of translational fidelity.

One of the primary rRNA binding proteins, it binds directly to 16S rRNA where it nucleates assembly of the body of the 30S subunit. In terms of biological role, with S5 and S12 plays an important role in translational accuracy. The protein is Small ribosomal subunit protein uS4 of Halalkalibacterium halodurans (strain ATCC BAA-125 / DSM 18197 / FERM 7344 / JCM 9153 / C-125) (Bacillus halodurans).